Reading from the N-terminus, the 155-residue chain is 2-C-methyl-D-erythritol 2,4-cyclodiphosphate synthase (155 aa).

The a divalent metal cation site is built by Asp-8 and His-10. Residues 8-10 (DVH) and 34-35 (HS) contribute to the 4-CDP-2-C-methyl-D-erythritol 2-phosphate site. Residue His-42 participates in a divalent metal cation binding. Residues 56-58 (DIG), 61-65 (FPDSD), 100-106 (AQKPKML), 132-135 (TTEE), Phe-139, and Lys-142 each bind 4-CDP-2-C-methyl-D-erythritol 2-phosphate.

It belongs to the IspF family. In terms of assembly, homotrimer. A divalent metal cation serves as cofactor.

It catalyses the reaction 4-CDP-2-C-methyl-D-erythritol 2-phosphate = 2-C-methyl-D-erythritol 2,4-cyclic diphosphate + CMP. The protein operates within isoprenoid biosynthesis; isopentenyl diphosphate biosynthesis via DXP pathway; isopentenyl diphosphate from 1-deoxy-D-xylulose 5-phosphate: step 4/6. Its function is as follows. Involved in the biosynthesis of isopentenyl diphosphate (IPP) and dimethylallyl diphosphate (DMAPP), two major building blocks of isoprenoid compounds. Catalyzes the conversion of 4-diphosphocytidyl-2-C-methyl-D-erythritol 2-phosphate (CDP-ME2P) to 2-C-methyl-D-erythritol 2,4-cyclodiphosphate (ME-CPP) with a corresponding release of cytidine 5-monophosphate (CMP). This chain is 2-C-methyl-D-erythritol 2,4-cyclodiphosphate synthase, found in Clostridium botulinum (strain 657 / Type Ba4).